We begin with the raw amino-acid sequence, 363 residues long: Tetraacyldisaccharide 4'-kinase (363 aa).

Residue 62-69 participates in ATP binding; it reads RVGGTGKT.

It belongs to the LpxK family.

It catalyses the reaction a lipid A disaccharide + ATP = a lipid IVA + ADP + H(+). Its pathway is glycolipid biosynthesis; lipid IV(A) biosynthesis; lipid IV(A) from (3R)-3-hydroxytetradecanoyl-[acyl-carrier-protein] and UDP-N-acetyl-alpha-D-glucosamine: step 6/6. Transfers the gamma-phosphate of ATP to the 4'-position of a tetraacyldisaccharide 1-phosphate intermediate (termed DS-1-P) to form tetraacyldisaccharide 1,4'-bis-phosphate (lipid IVA). The protein is Tetraacyldisaccharide 4'-kinase of Polynucleobacter asymbioticus (strain DSM 18221 / CIP 109841 / QLW-P1DMWA-1) (Polynucleobacter necessarius subsp. asymbioticus).